Consider the following 531-residue polypeptide: CTP synthase (531 aa).

Positions 1–264 are amidoligase domain; that stretch reads MPKFVVVTGG…GDFLVERLRL (264 aa). Residue Ser13 participates in CTP binding. Ser13 provides a ligand contact to UTP. 14 to 19 is an ATP binding site; sequence GLGKGV. Tyr54 is a binding site for L-glutamine. Residue Asp71 coordinates ATP. Mg(2+) is bound by residues Asp71 and Glu139. CTP contacts are provided by residues 146 to 148, 185 to 190, and Lys221; these read DYE and KTKPLQ. Residues 185–190 and Lys221 each bind UTP; that span reads KTKPLQ. The Glutamine amidotransferase type-1 domain occupies 293 to 531; the sequence is CGKYVELPDA…LSAAVEQSRR (239 aa). Gly351 provides a ligand contact to L-glutamine. The active-site Nucleophile; for glutamine hydrolysis is Cys378. L-glutamine is bound by residues 379-382, Glu402, and Arg459; that span reads FGMQ. Catalysis depends on residues His504 and Glu506.

It belongs to the CTP synthase family. As to quaternary structure, homotetramer.

The enzyme catalyses UTP + L-glutamine + ATP + H2O = CTP + L-glutamate + ADP + phosphate + 2 H(+). The catalysed reaction is L-glutamine + H2O = L-glutamate + NH4(+). It catalyses the reaction UTP + NH4(+) + ATP = CTP + ADP + phosphate + 2 H(+). It participates in pyrimidine metabolism; CTP biosynthesis via de novo pathway; CTP from UDP: step 2/2. Allosterically activated by GTP, when glutamine is the substrate; GTP has no effect on the reaction when ammonia is the substrate. The allosteric effector GTP functions by stabilizing the protein conformation that binds the tetrahedral intermediate(s) formed during glutamine hydrolysis. Inhibited by the product CTP, via allosteric rather than competitive inhibition. Its function is as follows. Catalyzes the ATP-dependent amination of UTP to CTP with either L-glutamine or ammonia as the source of nitrogen. Regulates intracellular CTP levels through interactions with the four ribonucleotide triphosphates. The polypeptide is CTP synthase (Pyrobaculum calidifontis (strain DSM 21063 / JCM 11548 / VA1)).